The chain runs to 244 residues: MSESIKVRAQRQAHCKDCSLSGLCLPLSLNMQDMDALDDIVKRGRPLKKGETLFRQGDTFSSVFAVRSGALRTFSVTDGGEEQITGFHLPSELVGLSGMDTEMYPVTAQALETTSVCEIPFERLDELSVLLPQLRRQLMRIMSREIRDDQQMMLLLSKKTADERIATFLINLSARFSARGFSANQFRLPMSRNEIGNYLGLAVETVSRVFTRFQQNGLLEAEGKEVRILDSIGLCALAGGAMDA.

One can recognise an HTH crp-type domain in the interval 159-232 (KTADERIATF…GKEVRILDSI (74 aa)). The segment at residues 192–211 (RNEIGNYLGLAVETVSRVFT) is a DNA-binding region (H-T-H motif).

Its function is as follows. Transcriptional regulator of arginine deiminase. The sequence is that of Transcriptional activator protein FnrA (fnrA) from Stutzerimonas stutzeri (Pseudomonas stutzeri).